Reading from the N-terminus, the 347-residue chain is NADH-quinone oxidoreductase subunit H (347 aa).

The next 8 membrane-spanning stretches (helical) occupy residues 13-33, 82-102, 115-135, 161-181, 198-218, 258-278, 286-306, and 321-341; these read LIMI…IAYI, AVFL…WAVV, VGIL…IMGG, IGLV…TDIV, FLDW…ISAL, AVVL…LPPV, VPGI…FAMV, and LGWK…AFVL.

This sequence belongs to the complex I subunit 1 family. In terms of assembly, NDH-1 is composed of 14 different subunits. Subunits NuoA, H, J, K, L, M, N constitute the membrane sector of the complex.

It is found in the cell inner membrane. The catalysed reaction is a quinone + NADH + 5 H(+)(in) = a quinol + NAD(+) + 4 H(+)(out). Its function is as follows. NDH-1 shuttles electrons from NADH, via FMN and iron-sulfur (Fe-S) centers, to quinones in the respiratory chain. The immediate electron acceptor for the enzyme in this species is believed to be ubiquinone. Couples the redox reaction to proton translocation (for every two electrons transferred, four hydrogen ions are translocated across the cytoplasmic membrane), and thus conserves the redox energy in a proton gradient. This subunit may bind ubiquinone. The polypeptide is NADH-quinone oxidoreductase subunit H (Rhizobium rhizogenes (strain K84 / ATCC BAA-868) (Agrobacterium radiobacter)).